The sequence spans 799 residues: Protein phosphatase 1 regulatory subunit 3F (799 aa).

Residues 1-30 (MARTAPVEPPLRHPAPPSPAAGEPRASAEA) are disordered. The Cytoplasmic portion of the chain corresponds to 1–772 (MARTAPVEPP…LTQTLGVLAG (772 aa)). Positions 7-19 (VEPPLRHPAPPSP) are enriched in pro residues. Ser-18 carries the phosphoserine modification. Residues 20-30 (AAGEPRASAEA) are compositionally biased toward low complexity. Positions 36-39 (RVLF) match the PP1-binding motif motif. 4 disordered regions span residues 53 to 108 (RYRP…PVPA), 201 to 235 (SPPG…SPDD), 332 to 353 (RRRP…LAEH), and 417 to 439 (ATCG…DRAA). Residues 78-97 (ADEEDDGEDGDEGEEEEEAF) show a composition bias toward acidic residues. One can recognise a CBM21 domain in the interval 127 to 283 (LERLGRVMVE…NNHGRNYTVL (157 aa)). A compositionally biased stretch (basic and acidic residues) spans 334–353 (RPFEEEPRMRSADDNTLAEH). Residue Ser-545 is modified to Phosphoserine. Disordered regions lie at residues 566–600 (KDTE…PPEI), 663–688 (SKSP…SWVP), and 722–743 (PHVN…KRSP). The span at 569-579 (EDPDDEGEGED) shows a compositional bias: acidic residues. Low complexity predominate over residues 585-594 (PSSPEGGSPK). Phosphoserine is present on residues Ser-587 and Ser-592. A compositionally biased stretch (basic and acidic residues) spans 679 to 688 (PTERESSWVP). Residues 773 to 793 (LVMVPVALNSGVSLLVLVLCL) form a helical membrane-spanning segment. Residues 794–799 (SLAWFS) lie on the Extracellular side of the membrane.

As to expression, highly expressed in brain (at protein level).

The protein localises to the membrane. Its function is as follows. Glycogen-targeting subunit for protein phosphatase 1 (PP1). The protein is Protein phosphatase 1 regulatory subunit 3F (Ppp1r3f) of Mus musculus (Mouse).